Reading from the N-terminus, the 174-residue chain is Shikimate kinase 2 (174 aa).

12 to 17 (GCGKTT) is a binding site for ATP. Threonine 16 and aspartate 32 together coordinate Mg(2+). Substrate is bound by residues aspartate 34, arginine 58, and glycine 79. The LID domain stretch occupies residues 112 to 126 (EAYPLADQRPTLTGR). Arginine 120 contributes to the ATP binding site. Arginine 139 is a substrate binding site. Residue glutamine 155 coordinates ATP.

This sequence belongs to the shikimate kinase family. AroL subfamily. In terms of assembly, monomer. Mg(2+) serves as cofactor.

The protein localises to the cytoplasm. The enzyme catalyses shikimate + ATP = 3-phosphoshikimate + ADP + H(+). It functions in the pathway metabolic intermediate biosynthesis; chorismate biosynthesis; chorismate from D-erythrose 4-phosphate and phosphoenolpyruvate: step 5/7. Functionally, catalyzes the specific phosphorylation of the 3-hydroxyl group of shikimic acid using ATP as a cosubstrate. This is Shikimate kinase 2 from Erwinia tasmaniensis (strain DSM 17950 / CFBP 7177 / CIP 109463 / NCPPB 4357 / Et1/99).